Reading from the N-terminus, the 322-residue chain is HPr kinase/phosphorylase (322 aa).

Residues H146 and K167 contribute to the active site. An ATP-binding site is contributed by G161–S168. Position 168 (S168) interacts with Mg(2+). Catalysis depends on D185, which acts as the Proton acceptor; for phosphorylation activity. Proton donor; for dephosphorylation activity. The segment at L209–D218 is important for the catalytic mechanism of both phosphorylation and dephosphorylation. E210 is a Mg(2+) binding site. Residue R250 is part of the active site. Residues Q271–R276 form an important for the catalytic mechanism of dephosphorylation region.

Belongs to the HPrK/P family. In terms of assembly, homohexamer. The cofactor is Mg(2+).

It catalyses the reaction [HPr protein]-L-serine + ATP = [HPr protein]-O-phospho-L-serine + ADP + H(+). The enzyme catalyses [HPr protein]-O-phospho-L-serine + phosphate + H(+) = [HPr protein]-L-serine + diphosphate. Its function is as follows. Catalyzes the ATP- as well as the pyrophosphate-dependent phosphorylation of a specific serine residue in HPr, a phosphocarrier protein of the phosphoenolpyruvate-dependent sugar phosphotransferase system (PTS). HprK/P also catalyzes the pyrophosphate-producing, inorganic phosphate-dependent dephosphorylation (phosphorolysis) of seryl-phosphorylated HPr (P-Ser-HPr). This Burkholderia mallei (strain NCTC 10247) protein is HPr kinase/phosphorylase.